Here is a 409-residue protein sequence, read N- to C-terminus: ATPase ASNA1 homolog (409 aa).

Residue 21–28 participates in ATP binding; sequence KGGVGKTT. Asp-62 is a catalytic residue. Glu-303 and Asn-330 together coordinate ATP. Residues Cys-342 and Cys-345 each coordinate Zn(2+).

It belongs to the arsA ATPase family. In terms of assembly, homodimer.

It localises to the cytoplasm. The protein resides in the endoplasmic reticulum. In terms of biological role, ATPase required for the post-translational delivery of tail-anchored (TA) proteins to the endoplasmic reticulum. Recognizes and selectively binds the transmembrane domain of TA proteins in the cytosol. This complex then targets to the endoplasmic reticulum by membrane-bound receptors, where the tail-anchored protein is released for insertion. This process is regulated by ATP binding and hydrolysis. ATP binding drives the homodimer towards the closed dimer state, facilitating recognition of newly synthesized TA membrane proteins. ATP hydrolysis is required for insertion. Subsequently, the homodimer reverts towards the open dimer state, lowering its affinity for the membrane-bound receptor, and returning it to the cytosol to initiate a new round of targeting. The protein is ATPase ASNA1 homolog of Leishmania major.